A 362-amino-acid polypeptide reads, in one-letter code: Ferrochelatase (362 aa).

Fe cation is bound by residues H228 and E309.

It belongs to the ferrochelatase family.

It is found in the cytoplasm. It catalyses the reaction heme b + 2 H(+) = protoporphyrin IX + Fe(2+). It functions in the pathway porphyrin-containing compound metabolism; protoheme biosynthesis; protoheme from protoporphyrin-IX: step 1/1. Catalyzes the ferrous insertion into protoporphyrin IX. The protein is Ferrochelatase of Bordetella bronchiseptica (strain ATCC BAA-588 / NCTC 13252 / RB50) (Alcaligenes bronchisepticus).